The sequence spans 118 residues: uncharacterized protein (118 aa).

3 consecutive transmembrane segments (helical) span residues 20–39, 46–63, and 67–85; these read VEGP…LLWI, LVVV…GEAV, and LSLV…AMSG. Positions 85 to 118 are disordered; sequence GDKSKKKGKKQRSILKDADDWDDDSWDDEGDWDE. The span at 88 to 97 shows a compositional bias: basic residues; that stretch reads SKKKGKKQRS. Over residues 103–118 the composition is skewed to acidic residues; the sequence is DDWDDDSWDDEGDWDE.

It is found in the cell membrane. This is an uncharacterized protein from Archaeoglobus fulgidus (strain ATCC 49558 / DSM 4304 / JCM 9628 / NBRC 100126 / VC-16).